The primary structure comprises 227 residues: Large ribosomal subunit protein bL25 (227 aa).

Positions 199–227 (AIAEAQSAEAAEEKAEESAEDEKKDGEEA) are disordered. Over residues 209–227 (AEEKAEESAEDEKKDGEEA) the composition is skewed to basic and acidic residues.

This sequence belongs to the bacterial ribosomal protein bL25 family. CTC subfamily. In terms of assembly, part of the 50S ribosomal subunit; part of the 5S rRNA/L5/L18/L25 subcomplex. Contacts the 5S rRNA. Binds to the 5S rRNA independently of L5 and L18.

In terms of biological role, this is one of the proteins that binds to the 5S RNA in the ribosome where it forms part of the central protuberance. This chain is Large ribosomal subunit protein bL25, found in Methylobacterium radiotolerans (strain ATCC 27329 / DSM 1819 / JCM 2831 / NBRC 15690 / NCIMB 10815 / 0-1).